We begin with the raw amino-acid sequence, 2760 residues long: A-kinase anchor protein 13 (2760 aa).

8 disordered regions span residues 356 to 388 (CSHKKNKDTGRPGEGVEPASAVDSRSASHQDSC), 442 to 517 (PDAR…EPKQ), 530 to 577 (AAGA…VLPA), 604 to 711 (SSLD…AAHN), 729 to 857 (EKDL…EQEG), 890 to 940 (GGSI…QEIS), 954 to 1029 (EKAL…ASEA), and 1132 to 1162 (EGTDLSCPTSKSKETPNNEETTQPPARDLPT). Residues 378 to 388 (DSRSASHQDSC) are compositionally biased toward polar residues. A compositionally biased stretch (basic and acidic residues) spans 442-454 (PDARQHSSGRELP). Residues 482–504 (QNSKPQVGESAKERLENSDISSA) are important for interaction with PRKAR2A. Low complexity predominate over residues 530–547 (AAGADAPAEASPAWSPEE). Composition is skewed to polar residues over residues 620–638 (KQNSESSAQHAQSLNSQAP), 654–664 (CPQSTETSSGG), and 701–711 (DTVTSDTAAHN). Positions 769 to 780 (SSFSLASSPESE) are enriched in low complexity. Ser-776 is modified (phosphoserine). A Phosphothreonine modification is found at Thr-801. Over residues 814 to 826 (PDGRDLNDTDKVG) the composition is skewed to basic and acidic residues. Over residues 839–849 (ELQTSMGNTSP) the composition is skewed to polar residues. Basic and acidic residues predominate over residues 906–931 (GKDKATKCPSVKEDVHSSEMSREDQR). Thr-932 is subject to Phosphothreonine. 2 stretches are compositionally biased toward polar residues: residues 958-972 (QHSNSPDTPSACLQT) and 1001-1020 (TSLSADSEQKTSSTEQSGSS). A Phosphoserine modification is found at Ser-962. The tract at residues 1213 to 1228 (SIEETATRIVEAVIKQ) is important for interaction with PRKAR2A. Disordered regions lie at residues 1392–1411 (GVLQRESGSDSDLFHSPSDE), 1425–1508 (LLCD…VPAN), and 1520–1539 (SPFRRHSWGPGKNAASDAEM). A compositionally biased stretch (low complexity) spans 1428-1439 (DTTGSSSSTDDT). Positions 1449-1472 (GSDVSLPQTSKLNRSRNHQSSNGF) are enriched in polar residues. 5 positions are modified to phosphoserine: Ser-1450, Ser-1468, Ser-1501, Ser-1526, and Ser-1585. Positions 1546–1695 (QVLGHVVRRP…SRPFHSASAN (150 aa)) are important for interaction with MAP2K3. The interval 1592–1628 (GGGVGNKPSSSLEISSANSSELRNPFSGEEQRSSLMS) is disordered. A compositionally biased stretch (low complexity) spans 1600 to 1611 (SSSLEISSANSS). Phosphoserine is present on residues Ser-1625, Ser-1628, and Ser-1630. Residue Lys-1654 is modified to N6-methyllysine. The segment at 1733–1755 (RNKMSSSKKSKKEKDKKTLNGHT) is disordered. The Phorbol-ester/DAG-type zinc-finger motif lies at 1753–1800 (GHTFSPIPIVGPINCSQCMKPFTNKDAYTCASCGAFVHKGCRENLASC). Phosphoserine is present on residues Ser-1838, Ser-1857, and Ser-1891. The segment at 1881-2760 (MSNTWKFLSH…VPAEGEEIFC (880 aa)) is interaction with ESR1. Thr-1892 carries the post-translational modification Phosphothreonine. A phosphoserine mark is found at Ser-1894 and Ser-1907. Residues 1956-2153 (KRQEVIYELM…KDVIGAVDSK (198 aa)) form the DH domain. Positions 2176–2280 (MRMKSGQMFA…WIQIIQDTIN (105 aa)) constitute a PH domain. 2 positions are modified to phosphoserine: Ser-2292 and Ser-2345. Residues 2292-2329 (SENEEEKRLLDTKARELKEQLQQKDQQILLLLEEKEMI) are a coiled coil. Position 2415 is a phosphothreonine (Thr-2415). The tract at residues 2422–2450 (HQLNASKGGEKEEGDDGQDLRRTESDSGL) is disordered. Residues 2439–2450 (QDLRRTESDSGL) show a composition bias toward basic and acidic residues. 2 positions are modified to phosphoserine: Ser-2511 and Ser-2514. The stretch at 2516–2632 (LIEQEKQRSL…LSQRQMEQDL (117 aa)) forms a coiled coil. Disordered regions lie at residues 2568–2588 (AEREETVRRRQQDLERDREEL) and 2660–2760 (TPSI…EIFC). Composition is skewed to polar residues over residues 2660–2684 (TPSITKSGSLDSELSVSPKRNSISR) and 2696–2711 (SSASQTKVPEGQSQAP). Phosphoserine is present on Ser-2676. The segment covering 2743–2752 (PGDGPAPEVP) has biased composition (low complexity).

As to quaternary structure, interacts with the cAMP-dependent protein kinase (PKA) holoenzyme and with the regulatory subunit PRKAR2A. Interacts with RHOA. Also interacts with RHOB and RHOC. Identified in a ternary complex with RHOA and PRKAR2A. Identified in a complex with NR3C1 and RHOA. Interacts with BRAF and KSR1. Identified in a complex with BRAF and KSR1. Component of a signaling complex containing at least AKAP13, PKN1, MAPK14, ZAK and MAP2K3. Within this complex, AKAP13 interacts directly with PKN1, which in turn recruits MAPK14, MAP2K3 and ZAK. Interacts (phosphorylated form) with YWHAB and YWHAZ. Interaction with YWHAB inhibits activation of RHOA, interferes with PKN1 binding and activation of MAP kinases. Interacts with GNA12. Interacts with IKBKB. Interacts with ESR1, THRA, PPARA and NME2. Interacts (via the C-terminal domain after the PH domain) with MEF2C and RXRB. Interacts (via the C-terminal domain after the PH domain) with PRKD1. Detected in bone osteoblasts (at protein level).

Its subcellular location is the cytoplasm. The protein resides in the cytosol. The protein localises to the cell cortex. It localises to the nucleus. It is found in the membrane. Scaffold protein that plays an important role in assembling signaling complexes downstream of several types of G protein-coupled receptors. Activates RHOA in response to signaling via G protein-coupled receptors via its function as Rho guanine nucleotide exchange factor. May also activate other Rho family members. Part of a kinase signaling complex that links ADRA1A and ADRA1B adrenergic receptor signaling to the activation of downstream p38 MAP kinases, such as MAPK11 and MAPK14. Part of a signaling complex that links ADRA1B signaling to the activation of RHOA and IKBKB/IKKB, leading to increased NF-kappa-B transcriptional activity. Part of a RHOA-dependent signaling cascade that mediates responses to lysophosphatidic acid (LPA), a signaling molecule that activates G-protein coupled receptors and potentiates transcriptional activation of the glucocorticoid receptor NR3C1. Part of a signaling cascade that stimulates MEF2C-dependent gene expression in response to lysophosphatidic acid (LPA). Part of a signaling pathway that activates MAPK11 and/or MAPK14 and leads to increased transcription activation of the estrogen receptors ESR1 and ESR2. Part of a signaling cascade that links cAMP and EGFR signaling to BRAF signaling and to PKA-mediated phosphorylation of KSR1, leading to the activation of downstream MAP kinases, such as MAPK1 or MAPK3. Functions as a scaffold protein that anchors cAMP-dependent protein kinase (PKA) and PRKD1. This promotes activation of PRKD1, leading to increased phosphorylation of HDAC5 and ultimately cardiomyocyte hypertrophy. Has no guanine nucleotide exchange activity on CDC42, Ras or Rac. Required for normal embryonic heart development, and in particular for normal sarcomere formation in the developing cardiomyocytes. Plays a role in cardiomyocyte growth and cardiac hypertrophy in response to activation of the beta-adrenergic receptor by phenylephrine or isoproterenol. Required for normal adaptive cardiac hypertrophy in response to pressure overload. Plays a role in osteogenesis. The sequence is that of A-kinase anchor protein 13 from Rattus norvegicus (Rat).